Here is a 627-residue protein sequence, read N- to C-terminus: Serine/threonine-protein phosphatase 2A 56 kDa regulatory subunit delta 2 isoform (627 aa).

Positions 1 to 37 are disordered; the sequence is MKGLRSKFVKALSLKDEQGSHKNGHSKSHYISKNGSY.

Belongs to the phosphatase 2A regulatory subunit B family. In terms of assembly, PP2A consists of a common heterodimeric core enzyme, composed of a 36 kDa catalytic subunit (subunit C) and a 65 kDa constant regulatory subunit (PR65 or subunit A), that associates with a variety of regulatory subunits. Proteins that associate with the core dimer include three families of regulatory subunits B (the R2/B/PR55/B55, R3/B''/PR72/PR130/PR59 and R5/B'/B56 families), the 48 kDa variable regulatory subunit, viral proteins, and cell signaling molecules.

Its subcellular location is the cytoplasm. The protein resides in the cell tip. The B regulatory subunit might modulate substrate selectivity and catalytic activity, and might also direct the localization of the catalytic enzyme to a particular subcellular compartment. Has a role in cell shape control and septum formation. This chain is Serine/threonine-protein phosphatase 2A 56 kDa regulatory subunit delta 2 isoform (par2), found in Schizosaccharomyces pombe (strain 972 / ATCC 24843) (Fission yeast).